The following is a 177-amino-acid chain: MGIPKEGEFVTIQSYKHDGHLHRTWRDTMVLKTSEYSLIGVNDHTLVTESDGRRWVTREPAIVYFHKKYWFNIIAMIREKGVSYYCNLASPYVLDDEALKYIDYDLDIKVFPDGEKRLLDVDEYEFHSKLMDYPEDIDFILKENVKTLVDWINNEKGPFSPEYVDIWYQRYQQLSKK.

Arginine 23 serves as the catalytic Proton donor. 6 residues coordinate Mg(2+): asparagine 87, aspartate 103, aspartate 105, aspartate 107, aspartate 120, and glutamate 123.

It belongs to the Ntdp family. Mg(2+) serves as cofactor.

It catalyses the reaction a ribonucleoside 5'-triphosphate + H2O = a ribonucleoside 5'-diphosphate + phosphate + H(+). It carries out the reaction a ribonucleoside 5'-diphosphate + H2O = a ribonucleoside 5'-phosphate + phosphate + H(+). In terms of biological role, has nucleoside phosphatase activity towards nucleoside triphosphates and nucleoside diphosphates. The polypeptide is Nucleoside triphosphate/diphosphate phosphatase (Enterococcus faecalis (strain ATCC 700802 / V583)).